Here is a 227-residue protein sequence, read N- to C-terminus: Ribose-5-phosphate isomerase A (227 aa).

Substrate-binding positions include 28-31, 81-84, and 94-97; these read TGST, DGAD, and KGGG. Glu103 functions as the Proton acceptor in the catalytic mechanism. Lys121 serves as a coordination point for substrate.

This sequence belongs to the ribose 5-phosphate isomerase family. In terms of assembly, homodimer.

The enzyme catalyses aldehydo-D-ribose 5-phosphate = D-ribulose 5-phosphate. The protein operates within carbohydrate degradation; pentose phosphate pathway; D-ribose 5-phosphate from D-ribulose 5-phosphate (non-oxidative stage): step 1/1. Its function is as follows. Catalyzes the reversible conversion of ribose-5-phosphate to ribulose 5-phosphate. The sequence is that of Ribose-5-phosphate isomerase A from Caulobacter vibrioides (strain ATCC 19089 / CIP 103742 / CB 15) (Caulobacter crescentus).